The chain runs to 372 residues: MAADKKAQKNTATKQIDPEQKEKALAAALAQIEKQFGKGSIMRLGDTQALDIEAVSTGSIGLDAALGIGGLPMGRIVEIYGPESSGKTTLTLSVIAQAQRIGKTCAFIDAEHALDPVYARKLGVDIDALLISQPDNGEQALEICDALVRSGAVDVIIVDSVAALTPKAEIEGDMGDSYMGLQARLMSQALRKLTANIKATNCLVVFINQIRMKIGVMFGNPETTTGGNALKFYASVRLDIRRSGVVKDGDEVVGSETKVKIVKNKVAPPFREVQFDIMYGEGIARMNELLILAEANGFIQKAGAWFSYNGTKIGQGKNNAIKWLKENPEVAEKIEQEIRNLLILTPDQPASEKLELDVNDESDFDEAFEEQE.

Residue 81–88 (GPESSGKT) participates in ATP binding.

The protein belongs to the RecA family.

It localises to the cytoplasm. In terms of biological role, can catalyze the hydrolysis of ATP in the presence of single-stranded DNA, the ATP-dependent uptake of single-stranded DNA by duplex DNA, and the ATP-dependent hybridization of homologous single-stranded DNAs. It interacts with LexA causing its activation and leading to its autocatalytic cleavage. This is Protein RecA from Haemophilus ducreyi (strain 35000HP / ATCC 700724).